A 544-amino-acid chain; its full sequence is uncharacterized protein (544 aa).

14 consecutive transmembrane segments (helical) span residues 31 to 51 (ILVFYLLFFLTDVAGIPAALA), 52 to 72 (GSVLMIGKIFDAINDPIIGLL), 84 to 104 (LPWMLGGMIPFALFYTAQWLI), 116 to 136 (WGLFIYYVAIAMAFNLCYTTV), 162 to 182 (FAFSIGGSILSLILYILIAAG), 191 to 211 (FGELGVMISVLSISALLWSAL), 230 to 250 (LAPLLMAAGITLILLAIAKSF), 257 to 277 (GFDYISFFLILLGLIWGGFGF), 318 to 338 (FLFVIGIYLCSWLAVQLTASI), 356 to 376 (TIALAVQGTALVMLFVWQALA), 383 to 403 (VIYFLGSMVWMGAEAGLWLVQ), 407 to 427 (VALLYTLAIFAGVGVSVAYLI), 450 to 470 (FFYAFMVLLQKVGLALGLFLV), and 501 to 521 (FAVAPLPAFFLLGGLILAIFY).

Belongs to the sodium:galactoside symporter (TC 2.A.2) family.

It is found in the cell membrane. This is an uncharacterized protein from Synechocystis sp. (strain ATCC 27184 / PCC 6803 / Kazusa).